The sequence spans 284 residues: 2-dehydro-3-deoxyphosphooctonate aldolase (284 aa).

This sequence belongs to the KdsA family.

It localises to the cytoplasm. It carries out the reaction D-arabinose 5-phosphate + phosphoenolpyruvate + H2O = 3-deoxy-alpha-D-manno-2-octulosonate-8-phosphate + phosphate. The protein operates within carbohydrate biosynthesis; 3-deoxy-D-manno-octulosonate biosynthesis; 3-deoxy-D-manno-octulosonate from D-ribulose 5-phosphate: step 2/3. Its pathway is bacterial outer membrane biogenesis; lipopolysaccharide biosynthesis. This chain is 2-dehydro-3-deoxyphosphooctonate aldolase, found in Photorhabdus laumondii subsp. laumondii (strain DSM 15139 / CIP 105565 / TT01) (Photorhabdus luminescens subsp. laumondii).